Reading from the N-terminus, the 140-residue chain is Transcription antitermination protein NusB (140 aa).

Belongs to the NusB family.

Functionally, involved in transcription antitermination. Required for transcription of ribosomal RNA (rRNA) genes. Binds specifically to the boxA antiterminator sequence of the ribosomal RNA (rrn) operons. The chain is Transcription antitermination protein NusB from Myxococcus xanthus (strain DK1622).